The chain runs to 1095 residues: DNA-directed RNA polymerase subunit beta (1095 aa).

A disordered region spans residues 1069 to 1095; sequence DLMQDVNPRRSTPSRPTYESLGKEYEE.

This sequence belongs to the RNA polymerase beta chain family. In cyanobacteria the RNAP catalytic core is composed of 2 alpha, 1 beta, 1 beta', 1 gamma and 1 omega subunit. When a sigma factor is associated with the core the holoenzyme is formed, which can initiate transcription.

The enzyme catalyses RNA(n) + a ribonucleoside 5'-triphosphate = RNA(n+1) + diphosphate. In terms of biological role, DNA-dependent RNA polymerase catalyzes the transcription of DNA into RNA using the four ribonucleoside triphosphates as substrates. This is DNA-directed RNA polymerase subunit beta from Prochlorococcus marinus (strain NATL1A).